Consider the following 562-residue polypeptide: Protein wntless (562 aa).

Over methionine 1–lysine 13 the chain is Cytoplasmic. Residues leucine 14–leucine 34 form a helical membrane-spanning segment. Residues tyrosine 35–glutamine 239 lie on the Lumenal side of the membrane. The N-linked (GlcNAc...) asparagine glycan is linked to asparagine 58. A helical membrane pass occupies residues isoleucine 240–tryptophan 260. The Cytoplasmic portion of the chain corresponds to arginine 261 to proline 270. The chain crosses the membrane as a helical span at residues alanine 271–leucine 291. Residues glutamate 292–glutamine 311 lie on the Lumenal side of the membrane. A helical transmembrane segment spans residues glycine 312–isoleucine 332. Topologically, residues glutamine 333–arginine 344 are cytoplasmic. The helical transmembrane segment at tyrosine 345–cysteine 365 threads the bilayer. Residues glutamate 366–threonine 390 lie on the Lumenal side of the membrane. The helical transmembrane segment at phenylalanine 391 to tryptophan 411 threads the bilayer. At lysine 412–arginine 441 the chain is on the cytoplasmic side. The helical transmembrane segment at phenylalanine 442–methionine 462 threads the bilayer. At glycine 463–serine 482 the chain is on the lumenal side. The helical transmembrane segment at alanine 483–tyrosine 503 threads the bilayer. The Cytoplasmic portion of the chain corresponds to alanine 504–aspartate 562. Residues histidine 539–aspartate 562 are disordered. Residues proline 541 to threonine 556 show a composition bias toward polar residues.

This sequence belongs to the wntless family. In terms of assembly, interacts with wg; in the Golgi. Interacts with Vps35, a component of the retromer complex; wls stability is regulated by Vps35.

It is found in the presynaptic cell membrane. Its subcellular location is the postsynaptic cell membrane. The protein resides in the cell membrane. It localises to the endoplasmic reticulum membrane. The protein localises to the endosome membrane. It is found in the golgi apparatus membrane. In terms of biological role, a segment polarity gene required for wingless (wg)-dependent patterning processes, acting in both wg-sending cells and wg-target cells. In non-neuronal cells wls directs wg secretion. The wls traffic loop encompasses the Golgi, the cell surface, an endocytic compartment and a retrograde route leading back to the Golgi, and involves clathrin-mediated endocytosis and the retromer complex (a conserved protein complex consisting of Vps35 and Vps26). In neuronal cells (the larval motorneuron NMJ), the wg signal moves across the synapse via the release of wls-containing exosome-like vesicles. Postsynaptic wls is required for the trafficking of fz2 through the fz2-interacting protein Grip. The polypeptide is Protein wntless (Drosophila erecta (Fruit fly)).